Reading from the N-terminus, the 1423-residue chain is DNA-directed RNA polymerase subunit beta' (1423 aa).

The Zn(2+) site is built by Cys70, Cys72, Cys85, and Cys88. 3 residues coordinate Mg(2+): Asp461, Asp463, and Asp465. Zn(2+) contacts are provided by Cys809, Cys883, Cys890, and Cys893. Residues 1383-1423 (EEHAAELRQPVQADTGDDPLGAVVGESHGTDADAGDYLTEE) are disordered.

This sequence belongs to the RNA polymerase beta' chain family. As to quaternary structure, the RNAP catalytic core consists of 2 alpha, 1 beta, 1 beta' and 1 omega subunit. When a sigma factor is associated with the core the holoenzyme is formed, which can initiate transcription. Mg(2+) serves as cofactor. It depends on Zn(2+) as a cofactor.

The catalysed reaction is RNA(n) + a ribonucleoside 5'-triphosphate = RNA(n+1) + diphosphate. Functionally, DNA-dependent RNA polymerase catalyzes the transcription of DNA into RNA using the four ribonucleoside triphosphates as substrates. In Rhizorhabdus wittichii (strain DSM 6014 / CCUG 31198 / JCM 15750 / NBRC 105917 / EY 4224 / RW1) (Sphingomonas wittichii), this protein is DNA-directed RNA polymerase subunit beta'.